The sequence spans 198 residues: MKKWLVVFFLSASALANPQQELNQRLGMNDGFSANFNQTVTSPEGEVVMEGEGSVDIARPSLFRWSTSLPDENLLVSDGKTLWYYSPFIEQVSIYWQEQAVQQTPFVLLTRNQSSDWENYQITQDGNVFTLVPKAADSTQGQFQIDIDAKGIVHGFNVIEQDGQKGIFKFTDMKLGKPAAARFTFNIPEGVEVDDQRN.

The signal sequence occupies residues methionine 1–alanine 16.

Belongs to the LolA family. In terms of assembly, monomer.

The protein localises to the periplasm. Functionally, participates in the translocation of lipoproteins from the inner membrane to the outer membrane. Only forms a complex with a lipoprotein if the residue after the N-terminal Cys is not an aspartate (The Asp acts as a targeting signal to indicate that the lipoprotein should stay in the inner membrane). The protein is Outer-membrane lipoprotein carrier protein of Vibrio vulnificus (strain YJ016).